We begin with the raw amino-acid sequence, 356 residues long: Alanine racemase (356 aa).

K35 acts as the Proton acceptor; specific for D-alanine in catalysis. K35 carries the post-translational modification N6-(pyridoxal phosphate)lysine. R130 provides a ligand contact to substrate. Catalysis depends on Y253, which acts as the Proton acceptor; specific for L-alanine. Position 301 (M301) interacts with substrate.

It belongs to the alanine racemase family. Pyridoxal 5'-phosphate serves as cofactor.

It carries out the reaction L-alanine = D-alanine. It participates in amino-acid biosynthesis; D-alanine biosynthesis; D-alanine from L-alanine: step 1/1. Its function is as follows. Catalyzes the interconversion of L-alanine and D-alanine. May also act on other amino acids. In Paraburkholderia phytofirmans (strain DSM 17436 / LMG 22146 / PsJN) (Burkholderia phytofirmans), this protein is Alanine racemase (alr).